The sequence spans 369 residues: Septin-5 (369 aa).

T13 is modified (phosphothreonine). The Septin-type G domain maps to 41 to 314 (KGFDFTLMVA…ENYRAHCIQQ (274 aa)). Residues 51–58 (GESGLGKS) are G1 motif. GTP-binding positions include 51–58 (GESGLGKS), T85, and G111. Residues 108 to 111 (DTPG) are G3 motif. Position 168 is an omega-N-methylarginine (R168). Positions 189–192 (AKAD) are G4 motif. 190–198 (KADCLVPSE) is a binding site for GTP. Phosphoserine is present on S225. GTP-binding residues include G248 and R263. S327 is modified (phosphoserine). T336 carries the phosphothreonine modification. Residues 338 to 369 (DAETEKLIRMKDEELRRMQEMLQRMKQQMQDQ) adopt a coiled-coil conformation.

Belongs to the TRAFAC class TrmE-Era-EngA-EngB-Septin-like GTPase superfamily. Septin GTPase family. As to quaternary structure, septins polymerize into heterooligomeric protein complexes that form filaments, and can associate with cellular membranes, actin filaments and microtubules. GTPase activity is required for filament formation. Interacts with SEPTIN2 and SEPTIN5. In platelets, associated with a complex containing STX4. Interacts with PRKN; this interaction leads to SEPTIN5 ubiquitination and degradation. Interacts with DYRK1A. Interacts with STX1A; in the cerebellar cortex. In terms of processing, phosphorylated by DYRK1A. In platelets, phosphorylated in response to thrombin, phorbol-12-myristate-13-acetate and collagen. As to expression, expressed at high levels in the CNS, as well as in heart and platelets (at protein level).

Its subcellular location is the cytoplasm. It is found in the cytoskeleton. Its function is as follows. Filament-forming cytoskeletal GTPase. May play a role in cytokinesis (Potential). May play a role in platelet secretion. In Homo sapiens (Human), this protein is Septin-5.